Consider the following 618-residue polypeptide: Proline--tRNA ligase (618 aa).

The protein belongs to the class-II aminoacyl-tRNA synthetase family. ProS type 1 subfamily. As to quaternary structure, homodimer.

The protein localises to the cytoplasm. The catalysed reaction is tRNA(Pro) + L-proline + ATP = L-prolyl-tRNA(Pro) + AMP + diphosphate. Its function is as follows. Catalyzes the attachment of proline to tRNA(Pro) in a two-step reaction: proline is first activated by ATP to form Pro-AMP and then transferred to the acceptor end of tRNA(Pro). As ProRS can inadvertently accommodate and process non-cognate amino acids such as alanine and cysteine, to avoid such errors it has two additional distinct editing activities against alanine. One activity is designated as 'pretransfer' editing and involves the tRNA(Pro)-independent hydrolysis of activated Ala-AMP. The other activity is designated 'posttransfer' editing and involves deacylation of mischarged Ala-tRNA(Pro). The misacylated Cys-tRNA(Pro) is not edited by ProRS. The protein is Proline--tRNA ligase of Streptococcus pyogenes serotype M2 (strain MGAS10270).